A 692-amino-acid polypeptide reads, in one-letter code: MARKTPLNRIRNIGIAAHIDAGKTTTSERILFYTGVSHKIGEVHDGAATMDWMEQEKERGITITSAATTCFWKDHQINLIDTPGHVDFTIEVERSMRVLDGAVSVFCSVGGVQPQSETVWRQANKYGVPRIVFVNKMDRIGANFYNVENQIKQRLKANPVPINIPIGAEDTFIGVIDLVQMKAIVWNNETMGAKYDVEEIPSDLLEKAKQYREKLVEAVAEQDEALMEKYLGGEELDIEEIKKGIKTGCLNMSFVPMLCGSSFKNKGVQTLLDAVIDYLPAPTEVVDIKGIDPKTEEEVFVKSSDDGEFAGLAFKIMTDPFVGQLTFVRVYRGKLESGSYVYNSTKDKKERVGRLLKMHSNKREDIKEVYAGEICAFVGLKDTLTGDTLCDEKNAVVLERMEFPEPVIHIAVEPKTKADQEKMGVALGKLAEEDPSFRVMTQEETGQTLIGGMGELHLEIIVDRLKREFKVEAEIGQPQVAFRETIRSSVSKEHKYAKQSGGRGQYGHVFIKLEPKEPGSGYEFVNEISGGVIPKEYIPAVDKGIQEAMQNGVLAGYPVVDFKVTLYDGSYHDVDSSEMAFKIAGSMAFKEASRAANPVLLEPMMKVEVEVPEEYMGDVIGDLNRRRGQINSMDDRLGLKIVNAFVPLVEMFGYSTDLRSATQGRGTYSMEFDHYGEVPSNIAKEIVEKRKG.

The 276-residue stretch at 8–283 (NRIRNIGIAA…AVIDYLPAPT (276 aa)) folds into the tr-type G domain. Residues 17–24 (AHIDAGKT), 81–85 (DTPGH), and 135–138 (NKMD) contribute to the GTP site.

This sequence belongs to the TRAFAC class translation factor GTPase superfamily. Classic translation factor GTPase family. EF-G/EF-2 subfamily.

The protein localises to the cytoplasm. In terms of biological role, catalyzes the GTP-dependent ribosomal translocation step during translation elongation. During this step, the ribosome changes from the pre-translocational (PRE) to the post-translocational (POST) state as the newly formed A-site-bound peptidyl-tRNA and P-site-bound deacylated tRNA move to the P and E sites, respectively. Catalyzes the coordinated movement of the two tRNA molecules, the mRNA and conformational changes in the ribosome. The protein is Elongation factor G (fusA) of Helicobacter pylori (strain J99 / ATCC 700824) (Campylobacter pylori J99).